We begin with the raw amino-acid sequence, 1531 residues long: DNA topoisomerase 2-alpha (1531 aa).

An N-acetylmethionine modification is found at Met1. The residue at position 4 (Ser4) is a Phosphoserine. Residue Lys17 forms a Glycyl lysine isopeptide (Lys-Gly) (interchain with G-Cter in SUMO2) linkage. ATP-binding positions include Asn91, Asn120, and 148-150 (SSN). Residues Lys156 and Lys157 each participate in a glycyl lysine isopeptide (Lys-Gly) (interchain with G-Cter in SUMO2) cross-link. 161-168 (GRNGYGAK) lines the ATP pocket. Residue Lys261 forms a Glycyl lysine isopeptide (Lys-Gly) (interchain with G-Cter in SUMO2) linkage. Position 282 is a phosphothreonine (Thr282). The segment at 342 to 344 (KKK) is interaction with DNA. Lys352 is covalently cross-linked (Glycyl lysine isopeptide (Lys-Gly) (interchain with G-Cter in SUMO2)). 376 to 378 (QTK) is a binding site for ATP. Glycyl lysine isopeptide (Lys-Gly) (interchain with G-Cter in SUMO2) cross-links involve residues Lys386, Lys397, Lys416, Lys418, Lys425, and Lys440. The 118-residue stretch at 455 to 572 (CTLILTEGDS…SLLRHRFLEE (118 aa)) folds into the Toprim domain. Mg(2+) is bound at residue Glu461. Glycyl lysine isopeptide (Lys-Gly) (interchain with G-Cter in SUMO2) cross-links involve residues Lys466, Lys480, and Lys529. Residues Asp541 and Asp543 each coordinate Mg(2+). Residues Lys584, Lys599, Lys614, Lys622, Lys625, Lys632, Lys639, Lys655, Lys662, and Lys676 each participate in a glycyl lysine isopeptide (Lys-Gly) (interchain with G-Cter in SUMO2) cross-link. The 457-residue stretch at 715–1171 (IPSMVDGLKP…SPSDLWKEDL (457 aa)) folds into the Topo IIA-type catalytic domain. Tyr805 functions as the O-(5'-phospho-DNA)-tyrosine intermediate in the catalytic mechanism. The segment at 990 to 999 (KLQTSLTCNS) is interaction with DNA. The Nuclear export signal signature appears at 1018–1028 (ILRDFFELRLK). Residue Lys1075 forms a Glycyl lysine isopeptide (Lys-Gly) (interchain with G-Cter in SUMO2) linkage. Disordered regions lie at residues 1090–1123 (WKEAQQKVPDEEENEESDNEKETEKSDSVTDSGP) and 1184–1531 (KEKQ…DDLF). Residues 1099-1108 (DEEENEESDN) show a composition bias toward acidic residues. A Phosphoserine; by CK1 modification is found at Ser1106. Glycyl lysine isopeptide (Lys-Gly) (interchain with G-Cter in SUMO2) cross-links involve residues Lys1114, Lys1196, and Lys1204. Phosphothreonine is present on Thr1205. Ser1213 is modified (phosphoserine). Lys1228 is covalently cross-linked (Glycyl lysine isopeptide (Lys-Gly) (interchain with G-Cter in SUMO2)). Residue Lys1240 forms a Glycyl lysine isopeptide (Lys-Gly) (interchain with G-Cter in SUMO1); alternate linkage. A Glycyl lysine isopeptide (Lys-Gly) (interchain with G-Cter in SUMO2); alternate cross-link involves residue Lys1240. Thr1244 bears the Phosphothreonine mark. The residue at position 1247 (Ser1247) is a Phosphoserine. The segment covering 1256–1272 (EGLKQRLEKKQKREPGT) has biased composition (basic and acidic residues). Glycyl lysine isopeptide (Lys-Gly) (interchain with G-Cter in SUMO2) cross-links involve residues Lys1259, Lys1276, Lys1283, and Lys1286. Phosphoserine is present on residues Ser1295, Ser1297, Ser1299, and Ser1302. Thr1327 is subject to Phosphothreonine. Residues 1330–1349 (LDSDEDFSDFDEKTDDEDFV) are compositionally biased toward acidic residues. Ser1332 and Ser1337 each carry phosphoserine. Thr1343 is modified (phosphothreonine; by PLK3). Residues Ser1351 and Ser1354 each carry the phosphoserine modification. Residues Lys1363, Lys1367, and Lys1373 each participate in a glycyl lysine isopeptide (Lys-Gly) (interchain with G-Cter in SUMO2) cross-link. Ser1374 and Ser1377 each carry phosphoserine. Lys1385 is covalently cross-linked (Glycyl lysine isopeptide (Lys-Gly) (interchain with G-Cter in SUMO2)). A phosphoserine mark is found at Ser1387, Ser1391, Ser1392, and Ser1393. Positions 1406–1431 (TNPVPKKNVTVKKTAAKSQSSTSTTG) are enriched in low complexity. Lys1422 participates in a covalent cross-link: Glycyl lysine isopeptide (Lys-Gly) (interchain with G-Cter in SUMO2); alternate. The residue at position 1422 (Lys1422) is an N6-acetyllysine; alternate. Residues 1433 to 1439 (KKRAAPK) form an interaction with PLSCR1 region. Lys1442 participates in a covalent cross-link: Glycyl lysine isopeptide (Lys-Gly) (interchain with G-Cter in SUMO2); alternate. An N6-acetyllysine; alternate modification is found at Lys1442. Ser1449 bears the Phosphoserine mark. Residues Lys1454 and Lys1459 each participate in a glycyl lysine isopeptide (Lys-Gly) (interchain with G-Cter in SUMO2) cross-link. Ser1469 carries the post-translational modification Phosphoserine; by CK2. Position 1470 is a phosphothreonine (Thr1470). 3 positions are modified to phosphoserine: Ser1471, Ser1474, and Ser1476. Glycyl lysine isopeptide (Lys-Gly) (interchain with G-Cter in SUMO2) cross-links involve residues Lys1484 and Lys1492. Over residues 1491-1502 (SKGESDDFHMDF) the composition is skewed to basic and acidic residues. Phosphoserine is present on residues Ser1495, Ser1504, and Ser1525.

It belongs to the type II topoisomerase family. In terms of assembly, homodimer. Interacts with COPS5. Interacts with RECQL5; this stimulates DNA decatenation. Interacts with SETMAR; stimulates the topoisomerase activity. Interacts with DHX9; this interaction occurs in a E2 enzyme UBE2I- and RNA-dependent manner, negatively regulates DHX9-mediated double-stranded DNA and RNA duplex helicase activity and stimulates TOP2A-mediated supercoiled DNA relaxation activity. Interacts with HNRNPU (via C-terminus); this interaction protects the topoisomerase TOP2A from degradation and positively regulates the relaxation of supercoiled DNA in a RNA-dependent manner. Interacts with MCM3AP isoform GANP. Interacts with ERCC6. Interacts with PLSCR1. Interacts with GCNA; this interaction allows the resolution of topoisomerase II (TOP2A) DNA-protein cross-links. Interacts with POL1RA/RPA1 (via dock II) and UBTF in the context of Pol I complex; may assist Pol I transcription initiation by releasing supercoils occurring during DNA unwinding. Interacts with TPRN; TPRN interacts with a number of DNA damage response proteins, is recruited to sites of DNA damage and may play a role in DNA damage repair. Mg(2+) serves as cofactor. Requires Mn(2+) as cofactor. It depends on Ca(2+) as a cofactor. In terms of processing, phosphorylation has no effect on catalytic activity. However, phosphorylation at Ser-1106 by CSNK1D/CK1 promotes DNA cleavable complex formation. (Microbial infection) Deubiquitinated by Epstein-Barr virus BPLF1; leading to stabilized SUMOylated TOP2A trapped in cleavage complexes, which halts the DNA damage response to TOP2A-induced double-strand DNA breaks. Post-translationally, SUMOylated. As to expression, expressed in the tonsil, spleen, lymph node, thymus, skin, pancreas, testis, colon, kidney, liver, brain and lung. Also found in high-grade lymphomas, squamous cell lung tumors and seminomas.

Its subcellular location is the cytoplasm. It is found in the nucleus. The protein resides in the nucleoplasm. It localises to the nucleolus. The enzyme catalyses ATP-dependent breakage, passage and rejoining of double-stranded DNA.. Specifically inhibited by the intercalating agent amsacrine. Functionally, key decatenating enzyme that alters DNA topology by binding to two double-stranded DNA molecules, generating a double-stranded break in one of the strands, passing the intact strand through the broken strand, and religating the broken strand. May play a role in regulating the period length of BMAL1 transcriptional oscillation. In Homo sapiens (Human), this protein is DNA topoisomerase 2-alpha (TOP2A).